The following is a 64-amino-acid chain: MSEETIVNCPTCGKTVVWGEQSPFRPFCSKRCQLIDLGEWAAEEKRIPSAGDLSDSDDWSEQQP.

The Zn(2+) site is built by Cys-9, Cys-12, Cys-28, and Cys-32. A disordered region spans residues 45–64; that stretch reads KRIPSAGDLSDSDDWSEQQP. Residues 54 to 64 show a composition bias toward acidic residues; the sequence is SDSDDWSEQQP.

This sequence belongs to the DNA gyrase inhibitor YacG family. Interacts with GyrB. It depends on Zn(2+) as a cofactor.

Its function is as follows. Inhibits all the catalytic activities of DNA gyrase by preventing its interaction with DNA. Acts by binding directly to the C-terminal domain of GyrB, which probably disrupts DNA binding by the gyrase. In Klebsiella pneumoniae subsp. pneumoniae (strain ATCC 700721 / MGH 78578), this protein is DNA gyrase inhibitor YacG.